The following is a 206-amino-acid chain: Small ribosomal subunit protein uS4 (206 aa).

An S4 RNA-binding domain is found at 96–156; it reads GRLDNVVYRM…EKSKKQARIK (61 aa).

This sequence belongs to the universal ribosomal protein uS4 family. In terms of assembly, part of the 30S ribosomal subunit. Contacts protein S5. The interaction surface between S4 and S5 is involved in control of translational fidelity.

Functionally, one of the primary rRNA binding proteins, it binds directly to 16S rRNA where it nucleates assembly of the body of the 30S subunit. In terms of biological role, with S5 and S12 plays an important role in translational accuracy. The polypeptide is Small ribosomal subunit protein uS4 (Actinobacillus succinogenes (strain ATCC 55618 / DSM 22257 / CCUG 43843 / 130Z)).